Consider the following 238-residue polypeptide: Endothelial protein C receptor (238 aa).

An N-terminal signal peptide occupies residues 1–17 (MLTTLLPILLLSGWAFC). The Extracellular segment spans residues 18-210 (SQDASDGLQR…GSQTSRSYTS (193 aa)). N-linked (GlcNAc...) asparagine glycosylation is found at asparagine 47, asparagine 64, asparagine 136, and asparagine 172. Cysteine 118 and cysteine 186 are joined by a disulfide. A helical transmembrane segment spans residues 211–231 (LVLGVLVGSFIIAGVAVGIFL). At 232–238 (CTGGRRC) the chain is on the cytoplasmic side.

Post-translationally, N-glycosylated. A soluble form exists; probably released by a metalloprotease. Seems to have the same activity as the membrane-bound form. In terms of tissue distribution, expressed strongly in the endothelial cells of arteries and veins in heart and lung, less intensely in capillaries in the lung and skin, and not at all in the endothelium of small vessels of the liver and kidney.

It is found in the membrane. In terms of biological role, binds activated protein C. Enhances protein C activation by the thrombin-thrombomodulin complex; plays a role in the protein C pathway controlling blood coagulation. The sequence is that of Endothelial protein C receptor (PROCR) from Homo sapiens (Human).